The chain runs to 413 residues: von Willebrand factor A domain-containing protein 1 (413 aa).

Residues 1-20 (MLPWTVIGLALSLRLARSGA) form the signal peptide. The 180-residue stretch at 32-211 (DLLFLLDSSA…ALRGSILDAM (180 aa)) folds into the VWFA domain. Phosphoserine occurs at positions 72, 78, and 91. Fibronectin type-III domains are found at residues 212–302 (WPQQ…TLPE) and 305–395 (GPEL…TPEG). N-linked (GlcNAc...) asparagine glycosylation occurs at Asn-262. A disordered region spans residues 385 to 413 (ALSAKACTPEGERSRAPRPQPQRTGGREP).

In terms of assembly, homodimer or homomultimer; disulfide-linked. Interacts with HSPG2. In terms of processing, N-glycosylated.

Its subcellular location is the secreted. It is found in the extracellular space. It localises to the extracellular matrix. The protein resides in the basement membrane. Promotes matrix assembly. Involved in the organization of skeletal muscles and in the formation of neuromuscular junctions. The chain is von Willebrand factor A domain-containing protein 1 (VWA1) from Bos taurus (Bovine).